A 487-amino-acid polypeptide reads, in one-letter code: uncharacterized protein (487 aa).

The next 3 helical transmembrane spans lie at 10 to 30 (AALM…AADA), 45 to 65 (VISP…AVAA), and 439 to 459 (APVV…DFTL).

Its subcellular location is the cell membrane. This is an uncharacterized protein from Mycobacterium tuberculosis (strain CDC 1551 / Oshkosh).